Consider the following 296-residue polypeptide: 4-hydroxy-tetrahydrodipicolinate synthase (296 aa).

T49 is a pyruvate binding site. Y137 (proton donor/acceptor) is an active-site residue. Catalysis depends on K166, which acts as the Schiff-base intermediate with substrate. Position 208 (V208) interacts with pyruvate.

Belongs to the DapA family. In terms of assembly, homotetramer; dimer of dimers.

The protein resides in the cytoplasm. It carries out the reaction L-aspartate 4-semialdehyde + pyruvate = (2S,4S)-4-hydroxy-2,3,4,5-tetrahydrodipicolinate + H2O + H(+). The protein operates within amino-acid biosynthesis; L-lysine biosynthesis via DAP pathway; (S)-tetrahydrodipicolinate from L-aspartate: step 3/4. Its function is as follows. Catalyzes the condensation of (S)-aspartate-beta-semialdehyde [(S)-ASA] and pyruvate to 4-hydroxy-tetrahydrodipicolinate (HTPA). The sequence is that of 4-hydroxy-tetrahydrodipicolinate synthase from Desulforamulus reducens (strain ATCC BAA-1160 / DSM 100696 / MI-1) (Desulfotomaculum reducens).